The following is a 408-amino-acid chain: GTPase Obg (408 aa).

The 159-residue stretch at 1-159 folds into the Obg domain; it reads MKFFDEARIE…RNLHLELKVL (159 aa). An OBG-type G domain is found at 160–334; it reads ADVGLLGMPN…LIFALQDFLD (175 aa). GTP-binding positions include 166-173, 191-195, 213-216, 284-287, and 315-317; these read GMPNAGKS, FTTLQ, DIPG, NKLD, and SAL. The Mg(2+) site is built by Ser-173 and Thr-193. A disordered region spans residues 385–408; that stretch reads AEDALAEDALDDDADGEDADPNAR.

This sequence belongs to the TRAFAC class OBG-HflX-like GTPase superfamily. OBG GTPase family. Monomer. The cofactor is Mg(2+).

The protein localises to the cytoplasm. Functionally, an essential GTPase which binds GTP, GDP and possibly (p)ppGpp with moderate affinity, with high nucleotide exchange rates and a fairly low GTP hydrolysis rate. Plays a role in control of the cell cycle, stress response, ribosome biogenesis and in those bacteria that undergo differentiation, in morphogenesis control. This chain is GTPase Obg, found in Azoarcus sp. (strain BH72).